We begin with the raw amino-acid sequence, 133 residues long: Protein msa (133 aa).

4 consecutive transmembrane segments (helical) span residues 3-23 (YLIL…AIGL), 27-47 (ILAA…ILFF), 55-75 (YIFF…VHLM), and 103-123 (FGFD…IILY).

It localises to the cell membrane. In terms of biological role, accessory element involved in the expression of sarA and several virulence factors. Modulates SarA production and/or function in a strain-dependent manner. Affects the transcription of the accessory gene regulator (agr) and genes encoding virulence factors including alpha toxin (hla) and protein A (spa). The chain is Protein msa (msa) from Staphylococcus aureus (strain bovine RF122 / ET3-1).